Here is a 410-residue protein sequence, read N- to C-terminus: Sprouty-related, EVH1 domain-containing protein 2 (410 aa).

Positions 5–122 constitute a WH1 domain; sequence THPDDDSYIV…RGVRKAIEDL (118 aa). The interval 127–171 is disordered; the sequence is TTSSSTIHNEAELGDDDVFTTATDSSSNSSQKREPNTRTISSPTS. Over residues 146 to 156 the composition is skewed to polar residues; it reads TTATDSSSNSS. The 56-residue stretch at 197–252 folds into the KBD domain; that stretch reads SYPQVTFPEDDEEIVRINPREKIWMTGYEDYRHAPVRGKYLDSTEDADSYVRFAKG. A phosphotyrosine mark is found at Tyr224 and Tyr227. Positions 274 to 294 are disordered; sequence DPKGNVIKTQPPRAKSRRRKE. The region spanning 300-408 is the SPR domain; it reads RCVYCRDMFN…CRCCGGKHKA (109 aa).

In terms of assembly, homodimer and heterodimer. Able to interact with SPRED1 to form heterodimers. Interacts with RAS. May interact with ZDHHC13 (via ANK repeats) and ZDHHC17 (via ANK repeats). Interacts with TESK1. Interacts with NF1. Phosphorylated on serine and threonine residues. Phosphorylated on tyrosine. Phosphorylation of Tyr-224 and Tyr-227 are required for ubiquitination. In terms of processing, ubiquitinated; leading to degradation by the proteasome. In terms of tissue distribution, expressed in the eye, with higher expression in lens epithelium than in lens fiber cells at postnatal day 15.

The protein localises to the cell membrane. It localises to the cytoplasmic vesicle. Its subcellular location is the secretory vesicle membrane. The protein resides in the cytoplasm. In terms of biological role, negatively regulates Ras signaling pathways and downstream activation of MAP kinases. Recruits and translocates NF1 to the cell membrane, thereby enabling NF1-dependent hydrolysis of active GTP-bound Ras to inactive GDP-bound Ras. Inhibits fibroblast growth factor (FGF)-induced retinal lens fiber differentiation, probably by inhibiting FGF-mediated phosphorylation of ERK1/2. Inhibits TGFB-induced epithelial-to-mesenchymal transition in lens epithelial cells. The protein is Sprouty-related, EVH1 domain-containing protein 2 (Spred2) of Rattus norvegicus (Rat).